Consider the following 704-residue polypeptide: Matrix metalloproteinase-9 (704 aa).

Positions 1-19 (MSPRQPLVLVFLVLGCCSA) are cleaved as a signal peptide. Positions 20–106 (APRPHKPTVV…PRCGVPDLGK (87 aa)) are cleaved as a propeptide — activation peptide. The N-linked (GlcNAc...) asparagine glycan is linked to Asn38. The Cysteine switch signature appears at 97–104 (PRCGVPDL). Cys99 provides a ligand contact to Zn(2+). Asn127 carries N-linked (GlcNAc...) asparagine glycosylation. Ca(2+) contacts are provided by Asp131 and Asp165. Positions 175 and 177 each coordinate Zn(2+). Positions 182, 183, 185, and 187 each coordinate Ca(2+). His190 contributes to the Zn(2+) binding site. Residues Gly197, Gln199, and Asp201 each contribute to the Ca(2+) site. Residue His203 coordinates Zn(2+). 3 residues coordinate Ca(2+): Asp205, Asp206, and Glu208. Fibronectin type-II domains lie at 225–273 (ADGA…FCPS), 283–331 (GDGK…FCPT), and 342–390 (SAGE…FCPD). 6 disulfides stabilise this stretch: Cys230–Cys256, Cys244–Cys271, Cys288–Cys314, Cys302–Cys329, Cys347–Cys373, and Cys361–Cys388. Residue His401 participates in Zn(2+) binding. Glu402 is a catalytic residue. Residues His405 and His411 each contribute to the Zn(2+) site. The interval 434–507 (DDVRGIQHLY…PSEAPTVPVD (74 aa)) is disordered. 2 stretches are compositionally biased toward pro residues: residues 450–461 (EPQPPTAPPTAP) and 483–496 (TGPP…PPTA). Cys513 and Cys701 are disulfide-bonded. Hemopexin repeat units lie at residues 515–560 (VNIF…WPAL), 561–605 (PRKL…GLGP), 607–654 (VTQV…YPGV), and 655–701 (PLNT…ILQC).

Belongs to the peptidase M10A family. Exists as monomer or homodimer; disulfide-linked. Also exists as heterodimer with LCN2. Macrophages and transformed cell lines produce only the monomeric form. Interacts with ECM1. Zn(2+) is required as a cofactor. Ca(2+) serves as cofactor. In terms of processing, N- and O-glycosylated.

It is found in the secreted. The protein resides in the extracellular space. The protein localises to the extracellular matrix. It carries out the reaction Cleavage of gelatin types I and V and collagen types IV and V.. In terms of biological role, matrix metalloproteinase that plays an essential role in local proteolysis of the extracellular matrix and in leukocyte migration. Could play a role in bone osteoclastic resorption. Cleaves KiSS1 at a Gly-|-Leu bond. Cleaves NINJ1 to generate the Secreted ninjurin-1 form. Cleaves type IV and type V collagen into large C-terminal three quarter fragments and shorter N-terminal one quarter fragments. Degrades fibronectin but not laminin or Pz-peptide. This chain is Matrix metalloproteinase-9 (MMP9), found in Canis lupus familiaris (Dog).